The following is a 53-amino-acid chain: Small, acid-soluble spore protein O (53 aa).

Residues 1–53 (MVRKKANHSRPGMNAAKAQGKDAGLTSQFHAEIGQEPLNQAQRQNNKKRKKNQ) form a disordered region.

This sequence belongs to the SspO family.

Its subcellular location is the spore core. The protein is Small, acid-soluble spore protein O of Halalkalibacterium halodurans (strain ATCC BAA-125 / DSM 18197 / FERM 7344 / JCM 9153 / C-125) (Bacillus halodurans).